A 115-amino-acid polypeptide reads, in one-letter code: Large ribosomal subunit protein bL19 (115 aa).

This sequence belongs to the bacterial ribosomal protein bL19 family.

Its function is as follows. This protein is located at the 30S-50S ribosomal subunit interface and may play a role in the structure and function of the aminoacyl-tRNA binding site. The chain is Large ribosomal subunit protein bL19 from Buchnera aphidicola subsp. Acyrthosiphon pisum (strain Tuc7).